An 84-amino-acid polypeptide reads, in one-letter code: Large ribosomal subunit protein bL27 (84 aa).

The tract at residues 1 to 22 (MAHKKAGGSTRNGRDSESKRLG) is disordered.

The protein belongs to the bacterial ribosomal protein bL27 family.

The protein is Large ribosomal subunit protein bL27 of Shewanella sp. (strain MR-4).